Here is a 204-residue protein sequence, read N- to C-terminus: Peptidyl-tRNA hydrolase (204 aa).

Tyr14 is a binding site for tRNA. The Proton acceptor role is filled by His19. TRNA-binding residues include Tyr64, Asn66, and Asn112.

The protein belongs to the PTH family. Monomer.

The protein localises to the cytoplasm. The catalysed reaction is an N-acyl-L-alpha-aminoacyl-tRNA + H2O = an N-acyl-L-amino acid + a tRNA + H(+). Its function is as follows. Hydrolyzes ribosome-free peptidyl-tRNAs (with 1 or more amino acids incorporated), which drop off the ribosome during protein synthesis, or as a result of ribosome stalling. Functionally, catalyzes the release of premature peptidyl moieties from peptidyl-tRNA molecules trapped in stalled 50S ribosomal subunits, and thus maintains levels of free tRNAs and 50S ribosomes. The chain is Peptidyl-tRNA hydrolase from Nitrobacter hamburgensis (strain DSM 10229 / NCIMB 13809 / X14).